We begin with the raw amino-acid sequence, 176 residues long: 4-hydroxylaminobenzoate lyase (176 aa).

The protein belongs to the PnbB family.

It carries out the reaction 4-hydroxylaminobenzoate + H2O + H(+) = 3,4-dihydroxybenzoate + NH4(+). Lyase involved in the degradation of nitroaromatic compounds. Catalyzes the conversion of 4-hydroxylaminobenzoate to 3,4-dihydroxybenzoate (protocatechuate). Required for the catabolism of 4-nitrotoluene. The protein is 4-hydroxylaminobenzoate lyase of Pseudomonas putida (Arthrobacter siderocapsulatus).